An 80-amino-acid polypeptide reads, in one-letter code: Raniseptin-5 (80 aa).

The signal sequence occupies residues 1–22 (MAFLKKSLFLVLFLGIVSLSIC). The propeptide occupies 23-49 (EEEKREGEEEEKQEEENEELSEEELRE).

The protein belongs to the frog skin active peptide (FSAP) family. Dermaseptin subfamily. In terms of tissue distribution, expressed by the skin glands.

It localises to the secreted. In terms of biological role, has antibacterial activity. This is Raniseptin-5 from Boana raniceps (Chaco tree frog).